The following is a 256-amino-acid chain: Omega-amidase YafV (256 aa).

Residues 4-234 (LKITLLQQPL…ATRIDAELSM (231 aa)) enclose the CN hydrolase domain. The Proton acceptor role is filled by E42. Residue K107 is part of the active site. C141 acts as the Nucleophile in catalysis.

This sequence belongs to the carbon-nitrogen hydrolase superfamily. NIT1/NIT2 family.

The catalysed reaction is a monoamide of a dicarboxylate + H2O = a dicarboxylate + NH4(+). Functionally, hydrolyzes alpha-ketoglutaramate (a-KGM) to alpha-ketoglutarate (alpha-KG) and ammonia (specific activity 6.65 umol/min/mg), has weak activity on L-glutamine, almost no activity on deaminated glutathione (dGSH) and none on glutathione. May function as a metabolite repair enzyme. The polypeptide is Omega-amidase YafV (yafV) (Escherichia coli (strain B / BL21-DE3)).